The chain runs to 67 residues: Conotoxin TxMMSK-01 (67 aa).

The signal sequence occupies residues 1 to 20; that stretch reads MMSKLGVLLITCLLLFPLTA. The propeptide occupies 21-53; that stretch reads VPLDGDQPADQPAERLQDDISSENHPFFDPVKR. Intrachain disulfides connect cysteine 54/cysteine 66, cysteine 55/cysteine 62, and cysteine 59/cysteine 65. At proline 64 the chain carries 4-hydroxyproline. Cysteine 66 bears the Cysteine amide mark.

Belongs to the conotoxin M superfamily. As to expression, expressed by the venom duct.

It localises to the secreted. In Conus textile (Cloth-of-gold cone), this protein is Conotoxin TxMMSK-01.